A 369-amino-acid polypeptide reads, in one-letter code: Endoglucanase (369 aa).

A signal peptide spans 1 to 22; that stretch reads MMTMLRGWITMIVMLTAINAQA. Residue Glu56 is the Proton donor of the active site. Asp117 functions as the Nucleophile in the catalytic mechanism.

This sequence belongs to the glycosyl hydrolase 8 (cellulase D) family.

Its subcellular location is the secreted. The catalysed reaction is Endohydrolysis of (1-&gt;4)-beta-D-glucosidic linkages in cellulose, lichenin and cereal beta-D-glucans.. It functions in the pathway glycan metabolism; bacterial cellulose biosynthesis. Its function is as follows. Hydrolyzes carboxymethylcellulose. This chain is Endoglucanase (bcsZ), found in Salmonella typhi.